The chain runs to 466 residues: Asparagine--tRNA ligase (466 aa).

Belongs to the class-II aminoacyl-tRNA synthetase family. Homodimer.

Its subcellular location is the cytoplasm. The enzyme catalyses tRNA(Asn) + L-asparagine + ATP = L-asparaginyl-tRNA(Asn) + AMP + diphosphate + H(+). This chain is Asparagine--tRNA ligase, found in Photorhabdus laumondii subsp. laumondii (strain DSM 15139 / CIP 105565 / TT01) (Photorhabdus luminescens subsp. laumondii).